The primary structure comprises 602 residues: Myotubularin (602 aa).

Residues 1 to 32 (MASNSTPKYNSNSLENSLRRSPGDGMNHEQND) form a disordered region. Residues 17–31 (SLRRSPGDGMNHEQN) show a composition bias toward basic and acidic residues. Positions 28–96 (HEQNDEIPCL…GVIARIEKMG (69 aa)) constitute a GRAM domain. A Myotubularin phosphatase domain is found at 162-537 (GWAVYDAMTE…RHLELWVNYY (376 aa)). 3 residues coordinate a 1,2-diacyl-sn-glycero-3-phospho-(1D-myo-inositol-3,5-bisphosphate): asparagine 287, asparagine 312, and isoleucine 313. Residues asparagine 287, asparagine 312, and isoleucine 313 each contribute to the a 1,2-diacyl-sn-glycero-3-phospho-(1D-myo-inositol-3-phosphate) site. Cysteine 374 serves as the catalytic Phosphocysteine intermediate. Serine 375, aspartate 376, glycine 377, tryptophan 378, aspartate 379, arginine 380, lysine 416, and arginine 420 together coordinate a 1,2-diacyl-sn-glycero-3-phospho-(1D-myo-inositol-3,5-bisphosphate). Residues serine 375, aspartate 376, glycine 377, tryptophan 378, aspartate 379, and arginine 380 each coordinate a 1,2-diacyl-sn-glycero-3-phospho-(1D-myo-inositol-3-phosphate). Position 420 (arginine 420) interacts with a 1,2-diacyl-sn-glycero-3-phospho-(1D-myo-inositol-3-phosphate). Positions 574–602 (QITNSPKMNSSTTSPSSPSQIMPQVHTPF) are disordered. Low complexity predominate over residues 583–592 (SSTTSPSSPS).

The protein belongs to the protein-tyrosine phosphatase family. Non-receptor class myotubularin subfamily.

It is found in the cytoplasm. It localises to the cell membrane. The protein resides in the cell projection. The protein localises to the filopodium. Its subcellular location is the ruffle. It is found in the late endosome. It localises to the myofibril. The protein resides in the sarcomere. It carries out the reaction a 1,2-diacyl-sn-glycero-3-phospho-(1D-myo-inositol-3-phosphate) + H2O = a 1,2-diacyl-sn-glycero-3-phospho-(1D-myo-inositol) + phosphate. It catalyses the reaction a 1,2-diacyl-sn-glycero-3-phospho-(1D-myo-inositol-3,5-bisphosphate) + H2O = a 1,2-diacyl-sn-glycero-3-phospho-(1D-myo-inositol-5-phosphate) + phosphate. The enzyme catalyses 1,2-dioctanoyl-sn-glycero-3-phospho-(1-D-myo-inositol-3-phosphate) + H2O = 1,2-dioctanoyl-sn-glycero-3-phospho-(1D-myo-inositol) + phosphate. The catalysed reaction is 1,2-dioctanoyl-sn-glycero-3-phospho-(1D-myo-inositol-3,5-bisphosphate) + H2O = 1,2-dioctanoyl-sn-glycero-3-phospho-(1D-myo-inositol-5-phosphate) + phosphate. It carries out the reaction 1,2-dihexadecanoyl-sn-glycero-3-phospho-(1D-myo-inositol-3,5-phosphate) + H2O = 1,2-dihexadecanoyl-sn-glycero-3-phospho-(1D-myo-inositol-5-phosphate) + phosphate. Functionally, lipid phosphatase which dephosphorylates phosphatidylinositol 3-monophosphate (PI3P) and phosphatidylinositol 3,5-bisphosphate (PI(3,5)P2). The polypeptide is Myotubularin (mtm1) (Xenopus tropicalis (Western clawed frog)).